Reading from the N-terminus, the 573-residue chain is Poly(ribitol-phosphate) beta-N-acetylglucosaminyltransferase TarS (573 aa).

UDP-N-acetyl-alpha-D-glucosamine contacts are provided by residues P9, D41, N68, R76, 92-94 (DSD), R127, and E178. D94 is a binding site for Mn(2+). D179 (proton acceptor) is an active-site residue. Residues R207 and 211–213 (HMS) contribute to the UDP-N-acetyl-alpha-D-glucosamine site.

The protein belongs to the glycosyltransferase 2 family. As to quaternary structure, homotrimer. Requires Mn(2+) as cofactor.

The catalysed reaction is 4-O-[(D-ribitylphospho)(n)-di{(2R)-glycerylphospho}]-N-acetyl-beta-D-mannosaminyl-(1-&gt;4)-N-acetyl-alpha-D-glucosaminyl di-trans,octa-cis-undecaprenyl diphosphate + n UDP-N-acetyl-alpha-D-glucosamine = 4-O-([2-N-acetyl-beta-D-glucosaminyl-1-D-ribitylphospho](n)-di{[2R]-1-glycerylphospho})-N-acetyl-beta-D-mannosaminyl-(1-&gt;4)-N-acetyl-alpha-D-glucosaminyl di-trans,octa-cis-undecaprenyl diphosphate + n UDP + n H(+). Its pathway is cell wall biogenesis; poly(ribitol phosphate) teichoic acid biosynthesis. Attaches beta-O-GlcNAc (beta-O-N-acetyl-D-glucosamine) residues to the C4 position of poly(RboP)-wall teichoic acids (WTAs). Mediates beta-lactam resistance in methicillin resistant Staphylococcus aureus (MRSA) strains. The sequence is that of Poly(ribitol-phosphate) beta-N-acetylglucosaminyltransferase TarS from Staphylococcus aureus (strain Mu50 / ATCC 700699).